The sequence spans 104 residues: Small ribosomal subunit protein uS10 (104 aa).

This sequence belongs to the universal ribosomal protein uS10 family. Part of the 30S ribosomal subunit.

Its function is as follows. Involved in the binding of tRNA to the ribosomes. This Maricaulis maris (strain MCS10) (Caulobacter maris) protein is Small ribosomal subunit protein uS10.